Here is a 184-residue protein sequence, read N- to C-terminus: Putative serine carboxypeptidase-like 52 (184 aa).

Positions 1 to 22 (MRTFSPKLLLLLLLVLRHHAES) are cleaved as a signal peptide. N-linked (GlcNAc...) asparagine glycosylation is present at Asn-93.

This sequence belongs to the peptidase S10 family.

The protein resides in the secreted. The sequence is that of Putative serine carboxypeptidase-like 52 (SCPL52) from Arabidopsis thaliana (Mouse-ear cress).